The sequence spans 185 residues: Elongation factor P (185 aa).

Belongs to the elongation factor P family.

Its subcellular location is the cytoplasm. The protein operates within protein biosynthesis; polypeptide chain elongation. In terms of biological role, involved in peptide bond synthesis. Stimulates efficient translation and peptide-bond synthesis on native or reconstituted 70S ribosomes in vitro. Probably functions indirectly by altering the affinity of the ribosome for aminoacyl-tRNA, thus increasing their reactivity as acceptors for peptidyl transferase. The sequence is that of Elongation factor P (efp) from Synechococcus elongatus (strain ATCC 33912 / PCC 7942 / FACHB-805) (Anacystis nidulans R2).